The sequence spans 388 residues: Galactokinase (388 aa).

Position 33-36 (33-36 (EHTD)) interacts with substrate. ATP is bound by residues Ser-67 and 124 to 130 (GSGLSSS). The Mg(2+) site is built by Ser-130 and Glu-162. The Proton acceptor role is filled by Asp-174. A substrate-binding site is contributed by Tyr-224.

It belongs to the GHMP kinase family. GalK subfamily.

It localises to the cytoplasm. It catalyses the reaction alpha-D-galactose + ATP = alpha-D-galactose 1-phosphate + ADP + H(+). It participates in carbohydrate metabolism; galactose metabolism. In terms of biological role, catalyzes the transfer of the gamma-phosphate of ATP to D-galactose to form alpha-D-galactose-1-phosphate (Gal-1-P). This is Galactokinase from Streptococcus thermophilus (strain ATCC BAA-491 / LMD-9).